The following is a 1501-amino-acid chain: 1-phosphatidylinositol 4,5-bisphosphate phosphodiesterase eta-2 (1501 aa).

Positions 28–47 (RGFSGLQGGRRRGRGEKGIP) are disordered. A necessary for plasma membrane localization region spans residues 75–229 (MPGPQPSAAS…WVTGLRYLMA (155 aa)). Residues 121–229 (SAMQEGTQMV…WVTGLRYLMA (109 aa)) form the PH domain. EF-hand domains are found at residues 243-278 (TRDQ…LNVN) and 279-315 (LPRQ…MSTR). Ca(2+)-binding residues include Asp256, Asn258, Asp260, Ser262, and Glu267. The PI-PLC X-box domain occupies 400–545 (QDMTQPLSHY…LKGKILVKGK (146 aa)). Residue His415 is part of the active site. Ca(2+) is bound by residues Asn416, Glu445, and Asp447. The active site involves His459. Glu494 serves as a coordination point for Ca(2+). The substrate site is built by Lys543 and Lys545. Disordered regions lie at residues 551 to 570 (ISED…DEME) and 609 to 700 (DPND…QKKT). Over residues 553-570 (EDAEEGEVSDEDSADEME) the composition is skewed to acidic residues. Residues Ser561 and Ser565 each carry the phosphoserine modification. The segment covering 626–638 (RKAEAKKGQSKVE) has biased composition (basic and acidic residues). A compositionally biased stretch (basic residues) spans 662–673 (SKRKKKGSKIKK). Residues Ser676 and Ser686 each carry the phosphoserine modification. The region spanning 707 to 821 (LSDLVKYTKS…GYVLKPQCMC (115 aa)) is the PI-PLC Y-box domain. Residues Ser734 and Arg761 each coordinate substrate. The region spanning 821-950 (CQGVFNPNSE…PGYRHVYLEG (130 aa)) is the C2 domain. Residues Ile865, Asp867, Asp891, Asp920, His921, and Asp922 each contribute to the Ca(2+) site. Disordered regions lie at residues 986-1073 (GSLD…RLFP), 1089-1238 (EEPA…SSND), 1273-1305 (SAAR…DELQ), and 1398-1469 (GDIT…GACS). The span at 1089–1107 (EEPALGPGLPLQAAAPTGP) shows a compositional bias: low complexity. 2 stretches are compositionally biased toward basic and acidic residues: residues 1142–1151 (GGRENEEPPL) and 1215–1227 (LWQR…HRDS). Residues 1421–1439 (RRSSSRSQSRVRAIASRAR) show a composition bias toward low complexity. Residues 1440–1463 (QAQERQQRLRGQDSRGPPEEERGT) show a composition bias toward basic and acidic residues.

The cofactor is Ca(2+). In terms of tissue distribution, specifically detected in the brain, with higher level in cerebral cortex, olfactory bulb and hippocampus (at protein level). Expressed in the pyramidal cells of the hippocampus, but also in eye and lung.

The protein localises to the cytoplasm. It is found in the cell membrane. It catalyses the reaction a 1,2-diacyl-sn-glycero-3-phospho-(1D-myo-inositol-4,5-bisphosphate) + H2O = 1D-myo-inositol 1,4,5-trisphosphate + a 1,2-diacyl-sn-glycerol + H(+). Activity is stimulated by GNB1:GNG2. In terms of biological role, the production of the second messenger molecules diacylglycerol (DAG) and inositol 1,4,5-trisphosphate (IP3) is mediated by activated phosphatidylinositol-specific phospholipase C enzymes. This phospholipase activity is very sensitive to calcium. May be important for formation and maintenance of the neuronal network in the postnatal brain. In Mus musculus (Mouse), this protein is 1-phosphatidylinositol 4,5-bisphosphate phosphodiesterase eta-2.